We begin with the raw amino-acid sequence, 200 residues long: Nascent polypeptide-associated complex subunit alpha (200 aa).

The segment covering 1-19 (MADPRIEELPDEETKKPTV) has biased composition (basic and acidic residues). Disordered regions lie at residues 1-52 (MADP…SRNE) and 120-165 (QQLA…EDKD). Residues 20-34 (EELDESSDEESDAEA) are compositionally biased toward acidic residues. In terms of domain architecture, NAC-A/B spans 49-114 (SRNEKKARKA…AKIEDLNASA (66 aa)). A compositionally biased stretch (basic and acidic residues) spans 127-143 (AEHDHAGHTHDHKHEAA). Residues 144-160 (KEEEEEEDDGEEVDAEG) are compositionally biased toward acidic residues. The UBA domain maps to 161-200 (IEDKDIELVMTQANVSRKKAIKALKENDNDIVNSIMALSV).

The protein belongs to the NAC-alpha family. Part of the nascent polypeptide-associated complex (NAC), consisting of EGD2 and EGD1. NAC associates with ribosomes via EGD1.

The protein resides in the cytoplasm. Its subcellular location is the nucleus. Functionally, component of the nascent polypeptide-associated complex (NAC), a dynamic component of the ribosomal exit tunnel, protecting the emerging polypeptides from interaction with other cytoplasmic proteins to ensure appropriate nascent protein targeting. The NAC complex also promotes mitochondrial protein import by enhancing productive ribosome interactions with the outer mitochondrial membrane and blocks the inappropriate interaction of ribosomes translating non-secretory nascent polypeptides with translocation sites in the membrane of the endoplasmic reticulum. EGD2 may also be involved in transcription regulation. In Chaetomium globosum (strain ATCC 6205 / CBS 148.51 / DSM 1962 / NBRC 6347 / NRRL 1970) (Soil fungus), this protein is Nascent polypeptide-associated complex subunit alpha (EGD2).